We begin with the raw amino-acid sequence, 338 residues long: Cytochrome f (338 aa).

Positions 1–45 (MNFKVCSFPSRRQSIAAFVRVLMVILLTLGALVSSDVLLPQPAAA) are cleaved as a signal peptide. Heme contacts are provided by Tyr-46, Cys-66, Cys-69, and His-70. Residues 300 to 316 (IAFLAAITLTQILLVLK) form a helical membrane-spanning segment.

Belongs to the cytochrome f family. In terms of assembly, the 4 large subunits of the cytochrome b6-f complex are cytochrome b6, subunit IV (17 kDa polypeptide, PetD), cytochrome f and the Rieske protein, while the 4 small subunits are PetG, PetL, PetM and PetN. The complex functions as a dimer. Heme is required as a cofactor.

The protein resides in the cellular thylakoid membrane. Component of the cytochrome b6-f complex, which mediates electron transfer between photosystem II (PSII) and photosystem I (PSI), cyclic electron flow around PSI, and state transitions. The polypeptide is Cytochrome f (petA) (Leptolyngbya laminosa (Phormidium laminosum)).